A 281-amino-acid chain; its full sequence is Bifunctional protein FolD (281 aa).

NADP(+)-binding positions include 165–167 and Ser-190; that span reads GRS.

The protein belongs to the tetrahydrofolate dehydrogenase/cyclohydrolase family. Homodimer.

The catalysed reaction is (6R)-5,10-methylene-5,6,7,8-tetrahydrofolate + NADP(+) = (6R)-5,10-methenyltetrahydrofolate + NADPH. The enzyme catalyses (6R)-5,10-methenyltetrahydrofolate + H2O = (6R)-10-formyltetrahydrofolate + H(+). It participates in one-carbon metabolism; tetrahydrofolate interconversion. Functionally, catalyzes the oxidation of 5,10-methylenetetrahydrofolate to 5,10-methenyltetrahydrofolate and then the hydrolysis of 5,10-methenyltetrahydrofolate to 10-formyltetrahydrofolate. The sequence is that of Bifunctional protein FolD from Polaromonas sp. (strain JS666 / ATCC BAA-500).